Here is a 364-residue protein sequence, read N- to C-terminus: Probable dual-specificity RNA methyltransferase RlmN (364 aa).

The active-site Proton acceptor is the glutamate 106. Positions 112–350 (YPQRNTVCIS…SCTVRDTRGR (239 aa)) constitute a Radical SAM core domain. Cysteines 119 and 356 form a disulfide. Positions 126, 130, and 133 each coordinate [4Fe-4S] cluster. S-adenosyl-L-methionine contacts are provided by residues 177–178 (GE), serine 211, 234–236 (SLH), and asparagine 313. Cysteine 356 functions as the S-methylcysteine intermediate in the catalytic mechanism.

Belongs to the radical SAM superfamily. RlmN family. Requires [4Fe-4S] cluster as cofactor.

The protein resides in the cytoplasm. The catalysed reaction is adenosine(2503) in 23S rRNA + 2 reduced [2Fe-2S]-[ferredoxin] + 2 S-adenosyl-L-methionine = 2-methyladenosine(2503) in 23S rRNA + 5'-deoxyadenosine + L-methionine + 2 oxidized [2Fe-2S]-[ferredoxin] + S-adenosyl-L-homocysteine. It carries out the reaction adenosine(37) in tRNA + 2 reduced [2Fe-2S]-[ferredoxin] + 2 S-adenosyl-L-methionine = 2-methyladenosine(37) in tRNA + 5'-deoxyadenosine + L-methionine + 2 oxidized [2Fe-2S]-[ferredoxin] + S-adenosyl-L-homocysteine. Specifically methylates position 2 of adenine 2503 in 23S rRNA and position 2 of adenine 37 in tRNAs. This chain is Probable dual-specificity RNA methyltransferase RlmN, found in Mycobacterium ulcerans (strain Agy99).